Here is a 269-residue protein sequence, read N- to C-terminus: Bis(5'-nucleosyl)-tetraphosphatase, symmetrical (269 aa).

Belongs to the Ap4A hydrolase family.

The catalysed reaction is P(1),P(4)-bis(5'-adenosyl) tetraphosphate + H2O = 2 ADP + 2 H(+). Hydrolyzes diadenosine 5',5'''-P1,P4-tetraphosphate to yield ADP. In Vibrio cholerae serotype O1 (strain ATCC 39541 / Classical Ogawa 395 / O395), this protein is Bis(5'-nucleosyl)-tetraphosphatase, symmetrical.